Here is a 426-residue protein sequence, read N- to C-terminus: Serine hydroxymethyltransferase (426 aa).

(6S)-5,6,7,8-tetrahydrofolate contacts are provided by residues Leu121 and 125–127 (GHL). Residue Lys230 is modified to N6-(pyridoxal phosphate)lysine. Residue 354-356 (SPF) coordinates (6S)-5,6,7,8-tetrahydrofolate.

It belongs to the SHMT family. Homodimer. It depends on pyridoxal 5'-phosphate as a cofactor.

Its subcellular location is the cytoplasm. It carries out the reaction (6R)-5,10-methylene-5,6,7,8-tetrahydrofolate + glycine + H2O = (6S)-5,6,7,8-tetrahydrofolate + L-serine. Its pathway is one-carbon metabolism; tetrahydrofolate interconversion. The protein operates within amino-acid biosynthesis; glycine biosynthesis; glycine from L-serine: step 1/1. Catalyzes the reversible interconversion of serine and glycine with tetrahydrofolate (THF) serving as the one-carbon carrier. This reaction serves as the major source of one-carbon groups required for the biosynthesis of purines, thymidylate, methionine, and other important biomolecules. Also exhibits THF-independent aldolase activity toward beta-hydroxyamino acids, producing glycine and aldehydes, via a retro-aldol mechanism. The polypeptide is Serine hydroxymethyltransferase (Gloeobacter violaceus (strain ATCC 29082 / PCC 7421)).